A 211-amino-acid polypeptide reads, in one-letter code: Protein-lysine N-methyltransferase DDB_G0272708 (211 aa).

This sequence belongs to the class I-like SAM-binding methyltransferase superfamily. EFM5 family.

Its subcellular location is the cytoplasm. S-adenosyl-L-methionine-dependent protein-lysine N-methyltransferase that methylates elongation factor 1-alpha. This chain is Protein-lysine N-methyltransferase DDB_G0272708, found in Dictyostelium discoideum (Social amoeba).